The sequence spans 54 residues: uncharacterized protein (54 aa).

The N-terminal stretch at 1–23 (MKELIFFLLIIVILFVVFMVVSS) is a signal peptide.

This is an uncharacterized protein from Acheta domesticus (House cricket).